We begin with the raw amino-acid sequence, 513 residues long: V-type proton ATPase subunit B (513 aa).

Arginine 375 provides a ligand contact to ATP. A compositionally biased stretch (basic and acidic residues) spans 484–503; that stretch reads ADRKGKGKDKPTTKDTRDTA. Residues 484 to 513 are disordered; it reads ADRKGKGKDKPTTKDTRDTAAPEEENLIDA. Positions 504–513 are enriched in acidic residues; sequence APEEENLIDA.

Belongs to the ATPase alpha/beta chains family. As to quaternary structure, V-ATPase is a heteromultimeric enzyme composed of a peripheral catalytic V1 complex (components A to H) attached to an integral membrane V0 proton pore complex (components: a, c, c', c'', d, e, f and VOA1).

The protein localises to the vacuole membrane. In terms of biological role, non-catalytic subunit of the V1 complex of vacuolar(H+)-ATPase (V-ATPase), a multisubunit enzyme composed of a peripheral complex (V1) that hydrolyzes ATP and a membrane integral complex (V0) that translocates protons. V-ATPase is responsible for acidifying and maintaining the pH of intracellular compartments. This Neurospora crassa (strain ATCC 24698 / 74-OR23-1A / CBS 708.71 / DSM 1257 / FGSC 987) protein is V-type proton ATPase subunit B.